Reading from the N-terminus, the 205-residue chain is Cytochrome c oxidase subunit 2 (205 aa).

Positions 115, 150, 152, 154, 158, and 161 each coordinate Cu cation. Glu-152 provides a ligand contact to Mg(2+).

The protein belongs to the cytochrome c oxidase subunit 2 family. As to quaternary structure, component of the cytochrome c oxidase (complex IV, CIV), a multisubunit enzyme composed of a catalytic core of 3 subunits and several supernumerary subunits. The complex exists as a monomer or a dimer and forms supercomplexes (SCs) in the inner mitochondrial membrane with ubiquinol-cytochrome c oxidoreductase (cytochrome b-c1 complex, complex III, CIII). Requires Cu cation as cofactor.

The protein localises to the mitochondrion inner membrane. It carries out the reaction 4 Fe(II)-[cytochrome c] + O2 + 8 H(+)(in) = 4 Fe(III)-[cytochrome c] + 2 H2O + 4 H(+)(out). In terms of biological role, component of the cytochrome c oxidase, the last enzyme in the mitochondrial electron transport chain which drives oxidative phosphorylation. The respiratory chain contains 3 multisubunit complexes succinate dehydrogenase (complex II, CII), ubiquinol-cytochrome c oxidoreductase (cytochrome b-c1 complex, complex III, CIII) and cytochrome c oxidase (complex IV, CIV), that cooperate to transfer electrons derived from NADH and succinate to molecular oxygen, creating an electrochemical gradient over the inner membrane that drives transmembrane transport and the ATP synthase. Cytochrome c oxidase is the component of the respiratory chain that catalyzes the reduction of oxygen to water. Electrons originating from reduced cytochrome c in the intermembrane space (IMS) are transferred via the dinuclear copper A center (CU(A)) of subunit 2 and heme A of subunit 1 to the active site in subunit 1, a binuclear center (BNC) formed by heme A3 and copper B (CU(B)). The BNC reduces molecular oxygen to 2 water molecules using 4 electrons from cytochrome c in the IMS and 4 protons from the mitochondrial matrix. The chain is Cytochrome c oxidase subunit 2 (COII) from Paramecium tetraurelia.